A 940-amino-acid polypeptide reads, in one-letter code: UvrABC system protein A (940 aa).

32 to 39 (GLSGSGKS) lines the ATP pocket. The C4-type zinc-finger motif lies at 252 to 279 (CIDCGISIDEISPRLFSFNSPFGKCDYC). ABC transporter domains follow at residues 309–589 (WANT…EGSL) and 609–937 (SNGK…HYLK). 641–648 (GVSGSGKS) lines the ATP pocket. The C4-type zinc-finger motif lies at 740 to 766 (CEACKGDGIIKIEMQFLSDVYVPCEIC).

Belongs to the ABC transporter superfamily. UvrA family. In terms of assembly, forms a heterotetramer with UvrB during the search for lesions.

The protein localises to the cytoplasm. The UvrABC repair system catalyzes the recognition and processing of DNA lesions. UvrA is an ATPase and a DNA-binding protein. A damage recognition complex composed of 2 UvrA and 2 UvrB subunits scans DNA for abnormalities. When the presence of a lesion has been verified by UvrB, the UvrA molecules dissociate. The polypeptide is UvrABC system protein A (Clostridium tetani (strain Massachusetts / E88)).